Reading from the N-terminus, the 24-residue chain is Pandinin-2 (24 aa).

Homooligomer. As to expression, expressed by the venom gland.

The protein localises to the secreted. It is found in the target cell membrane. Disrupts cell membranes through formation of pores. Has strong antimicrobial activity against Gram-positive bacteria B.subtilis, S.epidermidis, E.faecalis and S.aureus. Is less active against Gram-negative bacteria P.aeruginosa and E.coli. Also increases efficacy of antibiotics (ampicillin, chloramphenicol, streptomycin, kanamycin, novobiocin) when tested against E.coli, probably by facilitating their incorporation into the bacteria. Possesses antifungal activity against C.albicans and hemolytic activity against human, sheep and pig erythrocytes. This Pandinus imperator (Emperor scorpion) protein is Pandinin-2.